The primary structure comprises 161 residues: Tropomyosin-2 (161 aa).

Residues 1–161 (MEKIKEKLNS…DEIANSLENL (161 aa)) are a coiled coil. Residues 32 to 43 (LEQSNTEKENEI) are compositionally biased toward basic and acidic residues. A disordered region spans residues 32–97 (LEQSNTEKEN…NQDLEQQLED (66 aa)). S55 carries the post-translational modification Phosphoserine. Over residues 62–83 (SQLSDTKQLAEDSNNLRSNNEN) the composition is skewed to polar residues. Phosphoserine is present on residues S116 and S157.

As to quaternary structure, homodimer.

The protein localises to the cytoplasm. The protein resides in the cytoskeleton. Involved in cell morphogenesis. Binds to F-actin and stabilizes the actin filaments. The sequence is that of Tropomyosin-2 (TPM2) from Saccharomyces cerevisiae (strain ATCC 204508 / S288c) (Baker's yeast).